The following is a 171-amino-acid chain: uncharacterized protein (171 aa).

Positions 123–171 (CTKRDLRNDPPPAYQPDDPLKDLRKNFEKKEKPTWNDVEKKKNGVFEFH) are disordered. Residues 140–171 (DPLKDLRKNFEKKEKPTWNDVEKKKNGVFEFH) are compositionally biased toward basic and acidic residues.

This is an uncharacterized protein from Caenorhabditis elegans.